Consider the following 212-residue polypeptide: NAD(P)H dehydrogenase (quinone) 3 (212 aa).

The region spanning 4–192 (MLVLYYSSYG…DGARFQGRHV (189 aa)) is the Flavodoxin-like domain. Residues 10–15 (SSYGHI) and 78–80 (TRF) each bind FMN. Y12 provides a ligand contact to NAD(+). W98 contacts substrate. FMN-binding positions include 113–119 (STGSQHG) and H134. The interval 161 to 182 (YGASTLAEDENHRDRSPSANEL) is disordered.

The protein belongs to the WrbA family. The cofactor is FMN.

The catalysed reaction is a quinone + NADH + H(+) = a quinol + NAD(+). It catalyses the reaction a quinone + NADPH + H(+) = a quinol + NADP(+). This chain is NAD(P)H dehydrogenase (quinone) 3, found in Rhizobium meliloti (strain 1021) (Ensifer meliloti).